We begin with the raw amino-acid sequence, 562 residues long: Sulfite reductase [NADPH] hemoprotein beta-component (562 aa).

Positions 426, 432, 471, and 475 each coordinate [4Fe-4S] cluster. Cys-475 is a siroheme binding site.

The protein belongs to the nitrite and sulfite reductase 4Fe-4S domain family. As to quaternary structure, alpha(8)-beta(8). The alpha component is a flavoprotein, the beta component is a hemoprotein. Siroheme is required as a cofactor. Requires [4Fe-4S] cluster as cofactor.

The enzyme catalyses hydrogen sulfide + 3 NADP(+) + 3 H2O = sulfite + 3 NADPH + 4 H(+). Its pathway is sulfur metabolism; hydrogen sulfide biosynthesis; hydrogen sulfide from sulfite (NADPH route): step 1/1. Component of the sulfite reductase complex that catalyzes the 6-electron reduction of sulfite to sulfide. This is one of several activities required for the biosynthesis of L-cysteine from sulfate. This chain is Sulfite reductase [NADPH] hemoprotein beta-component, found in Shewanella denitrificans (strain OS217 / ATCC BAA-1090 / DSM 15013).